Here is a 123-residue protein sequence, read N- to C-terminus: UPF0102 protein DR_2282 (123 aa).

It belongs to the UPF0102 family.

This chain is UPF0102 protein DR_2282, found in Deinococcus radiodurans (strain ATCC 13939 / DSM 20539 / JCM 16871 / CCUG 27074 / LMG 4051 / NBRC 15346 / NCIMB 9279 / VKM B-1422 / R1).